Here is a 386-residue protein sequence, read N- to C-terminus: 26S proteasome non-ATPase regulatory subunit 13 homolog A (386 aa).

Alanine 2 carries the post-translational modification N-acetylalanine. The region spanning 173-347 is the PCI domain; it reads EFSDFYKSAL…GTIYVSWAQP (175 aa).

This sequence belongs to the proteasome subunit S11 family. In terms of assembly, component of the 19S regulatory particle (RP/PA700) lid subcomplex of the 26S proteasome. The 26S proteasome is composed of a core protease (CP), known as the 20S proteasome, capped at one or both ends by the 19S regulatory particle (RP/PA700). The RP/PA700 complex is composed of at least 17 different subunits in two subcomplexes, the base and the lid, which form the portions proximal and distal to the 20S proteolytic core, respectively. Ubiquitous with highest expression in flowers.

Its function is as follows. Acts as a regulatory subunit of the 26S proteasome which is involved in the ATP-dependent degradation of ubiquitinated proteins. This Arabidopsis thaliana (Mouse-ear cress) protein is 26S proteasome non-ATPase regulatory subunit 13 homolog A (RPN9A).